The following is a 327-amino-acid chain: Small ribosomal subunit protein RACK1z (327 aa).

WD repeat units lie at residues 13-44 (AHTD…ILWK), 61-91 (GHSH…RLWD), 103-133 (GHTK…KLWN), 148-180 (GHRD…KVWN), 192-222 (GHTG…LLWD), 233-262 (EANS…KIWD), and 293-323 (RKVI…RVWG).

Belongs to the WD repeat G protein beta family. Ribosomal protein RACK1 subfamily. Homodimer and heterodimer with RACK1B or RACK1C. Interacts with NUDT7. Interacts with GB1, MEKK1, MKK4, MKK5, MPK3 and MPK6, but not with GPA1 or MPK4. Interacts with OFUT20. In terms of tissue distribution, widely expressed.

Its subcellular location is the cytoplasm. It localises to the nucleus. In terms of biological role, major component of the RACK1 regulatory proteins that play a role in multiple signal transduction pathways. Involved in multiple hormone responses and developmental processes. MAPK cascade scaffolding protein involved in the protease IV and ArgC signaling pathway but not the flg22 pathway. This Arabidopsis thaliana (Mouse-ear cress) protein is Small ribosomal subunit protein RACK1z.